Here is a 244-residue protein sequence, read N- to C-terminus: Phosphoadenosine 5'-phosphosulfate reductase (244 aa).

Cys-239 (nucleophile; cysteine thiosulfonate intermediate) is an active-site residue.

The protein belongs to the PAPS reductase family. CysH subfamily.

The protein resides in the cytoplasm. The catalysed reaction is [thioredoxin]-disulfide + sulfite + adenosine 3',5'-bisphosphate + 2 H(+) = [thioredoxin]-dithiol + 3'-phosphoadenylyl sulfate. The protein operates within sulfur metabolism; hydrogen sulfide biosynthesis; sulfite from sulfate: step 3/3. Catalyzes the formation of sulfite from phosphoadenosine 5'-phosphosulfate (PAPS) using thioredoxin as an electron donor. The polypeptide is Phosphoadenosine 5'-phosphosulfate reductase (Salmonella agona (strain SL483)).